The sequence spans 237 residues: Protein GrpE (237 aa).

Disordered stretches follow at residues 1-52 (MSGD…RLQQ) and 200-237 (KVSMGPGPQSGASPSSAQSNDDSTATFQGEADPAEPGV). The span at 27–40 (ASMNSDEGQPSAQS) shows a compositional bias: polar residues. Low complexity predominate over residues 204 to 218 (GPGPQSGASPSSAQS).

Belongs to the GrpE family. Homodimer.

The protein resides in the cytoplasm. Functionally, participates actively in the response to hyperosmotic and heat shock by preventing the aggregation of stress-denatured proteins, in association with DnaK and GrpE. It is the nucleotide exchange factor for DnaK and may function as a thermosensor. Unfolded proteins bind initially to DnaJ; upon interaction with the DnaJ-bound protein, DnaK hydrolyzes its bound ATP, resulting in the formation of a stable complex. GrpE releases ADP from DnaK; ATP binding to DnaK triggers the release of the substrate protein, thus completing the reaction cycle. Several rounds of ATP-dependent interactions between DnaJ, DnaK and GrpE are required for fully efficient folding. The polypeptide is Protein GrpE (Prochlorococcus marinus (strain MIT 9303)).